The primary structure comprises 482 residues: Glycogen synthase (482 aa).

Position 20 (Lys-20) interacts with ADP-alpha-D-glucose.

Belongs to the glycosyltransferase 1 family. Bacterial/plant glycogen synthase subfamily.

It catalyses the reaction [(1-&gt;4)-alpha-D-glucosyl](n) + ADP-alpha-D-glucose = [(1-&gt;4)-alpha-D-glucosyl](n+1) + ADP + H(+). Its pathway is glycan biosynthesis; glycogen biosynthesis. In terms of biological role, synthesizes alpha-1,4-glucan chains using ADP-glucose. The sequence is that of Glycogen synthase from Aliivibrio salmonicida (strain LFI1238) (Vibrio salmonicida (strain LFI1238)).